The chain runs to 174 residues: Gamma-crystallin C (174 aa).

2 consecutive Beta/gamma crystallin 'Greek key' domains span residues 2–40 (GKIT…RVDS) and 41–83 (GCWM…CLIP). Residue Cys23 is modified to S-methylcysteine. Positions 84–87 (QTSS) are connecting peptide. Beta/gamma crystallin 'Greek key' domains lie at 88–128 (HRLR…HVLE) and 129–171 (GCWV…RRVV).

This sequence belongs to the beta/gamma-crystallin family. In terms of assembly, monomer.

In terms of biological role, crystallins are the dominant structural components of the vertebrate eye lens. This Canis lupus familiaris (Dog) protein is Gamma-crystallin C (CRYGC).